The chain runs to 394 residues: 1-deoxy-D-xylulose 5-phosphate reductoisomerase (394 aa).

NADPH is bound by residues Thr12, Gly13, Ser14, Ile15, Lys39, Gln40, and Asn126. A 1-deoxy-D-xylulose 5-phosphate-binding site is contributed by Lys127. An NADPH-binding site is contributed by Glu128. Asp152 contributes to the Mn(2+) binding site. 1-deoxy-D-xylulose 5-phosphate is bound by residues Ser153, Glu154, Ser183, and His206. Glu154 contributes to the Mn(2+) binding site. Gly212 contributes to the NADPH binding site. 4 residues coordinate 1-deoxy-D-xylulose 5-phosphate: Ser219, Asn224, Lys225, and Glu228. Glu228 contributes to the Mn(2+) binding site.

It belongs to the DXR family. Mg(2+) is required as a cofactor. It depends on Mn(2+) as a cofactor.

It catalyses the reaction 2-C-methyl-D-erythritol 4-phosphate + NADP(+) = 1-deoxy-D-xylulose 5-phosphate + NADPH + H(+). It participates in isoprenoid biosynthesis; isopentenyl diphosphate biosynthesis via DXP pathway; isopentenyl diphosphate from 1-deoxy-D-xylulose 5-phosphate: step 1/6. Its function is as follows. Catalyzes the NADPH-dependent rearrangement and reduction of 1-deoxy-D-xylulose-5-phosphate (DXP) to 2-C-methyl-D-erythritol 4-phosphate (MEP). This Neisseria meningitidis serogroup B (strain ATCC BAA-335 / MC58) protein is 1-deoxy-D-xylulose 5-phosphate reductoisomerase.